Here is a 361-residue protein sequence, read N- to C-terminus: S-adenosylmethionine:tRNA ribosyltransferase-isomerase (361 aa).

The protein belongs to the QueA family. In terms of assembly, monomer.

The protein localises to the cytoplasm. The catalysed reaction is 7-aminomethyl-7-carbaguanosine(34) in tRNA + S-adenosyl-L-methionine = epoxyqueuosine(34) in tRNA + adenine + L-methionine + 2 H(+). It functions in the pathway tRNA modification; tRNA-queuosine biosynthesis. Its function is as follows. Transfers and isomerizes the ribose moiety from AdoMet to the 7-aminomethyl group of 7-deazaguanine (preQ1-tRNA) to give epoxyqueuosine (oQ-tRNA). This is S-adenosylmethionine:tRNA ribosyltransferase-isomerase from Glaesserella parasuis serovar 5 (strain SH0165) (Haemophilus parasuis).